Consider the following 296-residue polypeptide: Pyridoxine/pyridoxal/pyridoxamine kinase (296 aa).

2 residues coordinate substrate: Ser23 and His59. An ATP-binding site is contributed by Asp125. A Mg(2+)-binding site is contributed by Tyr136. Residues Thr157, Glu162, Thr195, 222 to 225 (HQRV), and Thr232 contribute to the ATP site. Mg(2+) is bound at residue Glu162. Position 234 (Asp234) interacts with substrate.

Belongs to the pyridoxine kinase family. PdxK subfamily. As to quaternary structure, homodimer. Mg(2+) serves as cofactor.

The catalysed reaction is pyridoxal + ATP = pyridoxal 5'-phosphate + ADP + H(+). It catalyses the reaction pyridoxine + ATP = pyridoxine 5'-phosphate + ADP + H(+). The enzyme catalyses pyridoxamine + ATP = pyridoxamine 5'-phosphate + ADP + H(+). The protein operates within cofactor metabolism; pyridoxal 5'-phosphate salvage; pyridoxal 5'-phosphate from pyridoxal: step 1/1. Its pathway is cofactor metabolism; pyridoxal 5'-phosphate salvage; pyridoxine 5'-phosphate from pyridoxine: step 1/1. It functions in the pathway cofactor metabolism; pyridoxal 5'-phosphate salvage; pyridoxamine 5'-phosphate from pyridoxamine: step 1/1. B6-vitamer kinase involved in the salvage pathway of pyridoxal 5'-phosphate (PLP). Catalyzes the phosphorylation of pyridoxine (PN), pyridoxal (PL), and pyridoxamine (PM), forming their respective 5'-phosphorylated esters, i.e. PNP, PLP and PMP. The protein is Pyridoxine/pyridoxal/pyridoxamine kinase of Bordetella avium (strain 197N).